The following is a 500-amino-acid chain: Probable cytosol aminopeptidase (500 aa).

Mn(2+) contacts are provided by lysine 268 and aspartate 273. The active site involves lysine 280. Mn(2+) is bound by residues aspartate 291, aspartate 350, and glutamate 352. Arginine 354 is an active-site residue.

Belongs to the peptidase M17 family. Mn(2+) is required as a cofactor.

Its subcellular location is the cytoplasm. It carries out the reaction Release of an N-terminal amino acid, Xaa-|-Yaa-, in which Xaa is preferably Leu, but may be other amino acids including Pro although not Arg or Lys, and Yaa may be Pro. Amino acid amides and methyl esters are also readily hydrolyzed, but rates on arylamides are exceedingly low.. It catalyses the reaction Release of an N-terminal amino acid, preferentially leucine, but not glutamic or aspartic acids.. Functionally, presumably involved in the processing and regular turnover of intracellular proteins. Catalyzes the removal of unsubstituted N-terminal amino acids from various peptides. In Baumannia cicadellinicola subsp. Homalodisca coagulata, this protein is Probable cytosol aminopeptidase.